The primary structure comprises 310 residues: Putative S-adenosyl-L-methionine-dependent methyltransferase MMAR_0356 (310 aa).

Residues Asp137 and 166–167 (DL) contribute to the S-adenosyl-L-methionine site.

The protein belongs to the UPF0677 family.

Exhibits S-adenosyl-L-methionine-dependent methyltransferase activity. The chain is Putative S-adenosyl-L-methionine-dependent methyltransferase MMAR_0356 from Mycobacterium marinum (strain ATCC BAA-535 / M).